We begin with the raw amino-acid sequence, 653 residues long: Laccase ustL (653 aa).

A signal peptide spans 1 to 20; sequence MTSLTGLALLLCVLASQSWA. Plastocyanin-like domains follow at residues 31–143 and 173–362; these read WEKG…RPKR and VLSD…ATQV. Asn74, Asn220, Asn235, Asn255, Asn277, Asn405, Asn463, and Asn479 each carry an N-linked (GlcNAc...) asparagine glycan. Residues 463-594 form the Plastocyanin-like 3 domain; the sequence is NQTVGTEDEK…GGMSIALLDG (132 aa). Residues His501, His504, His506, His576, Cys577, His578, and His582 each contribute to the Cu cation site. Asn623 is a glycosylation site (N-linked (GlcNAc...) asparagine).

The protein belongs to the multicopper oxidase family.

The catalysed reaction is 4 norrubrofusarin + O2 = 2 ustilaginoidin A + 2 H2O. Its pathway is secondary metabolite biosynthesis. In terms of biological role, laccase; part of the gene cluster that mediates the biosynthesis of ustilaginoidins, dimeric gamma-naphthopyrones isolated from different fungal species. The first step in the biosynthesis of ustilaginoidins is the production of gamma-naphthopyrone precursor YWA1 by the non-reducing polyketide synthase ustP, via condensation of one acetyl-CoA starter unit with 6 malonyl-CoA units. YWA1 is then probably substrate of the ustZ to yield norrubrofusarin via a dehydration reaction. A key enzyme in the biosynthetic pathway is the laccase ustL, which catalyzes the oxidative dimerization of norrubrofusarin to ustilaginoidin A. It can produce the M- and P-atropisomers in varying amounts, depending on the reaction conditions. For the biosynthesis of 3-methylustilaginoid in derivatives such as chaetochromin A, a methylated derivative of YWA1 is required. The C-methylation is considered to be catalyzed by ustM, the phosphopantetheine attachment site of which indicates that it acts on the growing polyketide chain before release of the product. For the biosynthesis of chaetochromin A, it is assumed that saturation of the D2 double bond takes place before dimerization, and is probably catalyzed by an external reductase because no candidate gene was identified within the cluster. The chain is Laccase ustL from Ustilaginoidea virens (Rice false smut fungus).